Consider the following 181-residue polypeptide: CASP-like protein 5A1 (181 aa).

At M1–T38 the chain is on the cytoplasmic side. The helical transmembrane segment at P39–M59 threads the bilayer. The Extracellular segment spans residues S60 to T77. Residues T78–V98 form a helical membrane-spanning segment. Residues K99–D115 lie on the Cytoplasmic side of the membrane. Residues G116 to I136 form a helical membrane-spanning segment. Over D137–T153 the chain is Extracellular. A helical transmembrane segment spans residues A154–Y174. Residues S175 to G181 are Cytoplasmic-facing.

This sequence belongs to the Casparian strip membrane proteins (CASP) family. In terms of assembly, homodimer and heterodimers.

It localises to the cell membrane. The polypeptide is CASP-like protein 5A1 (Zea mays (Maize)).